We begin with the raw amino-acid sequence, 309 residues long: MFPDLAADLKAAMPDLRGRLLGNEPLAPLTWFRVGGPAQVLFTPADEDDLGYFLSLLPAEVPVLCIGVGSNLIVRDGGLPGVVIRLAPRGFGEARSDGETVHAGAAALDKRVAETAAAAQLGGLEFYFGIPGTIGGALRMNAGANGRETRDVLIDATAVDRAGRRHVIDLAGMQFSYRSSGADPSLIFTSARFRGTPASPDAIRAKMNEVQAHRELAQPIREKTGGSTFKNPPGHSAWKLIDAAGCRGLRIGGAQVSEMHCNFLINIGDATAADIETLGETVRERVKAQSGIELQWEIKRIGVTAGIAG.

The 166-residue stretch at 33–198 (RVGGPAQVLF…TSARFRGTPA (166 aa)) folds into the FAD-binding PCMH-type domain. Residue R178 is part of the active site. S227 (proton donor) is an active-site residue. Residue E297 is part of the active site.

This sequence belongs to the MurB family. FAD is required as a cofactor.

It is found in the cytoplasm. The enzyme catalyses UDP-N-acetyl-alpha-D-muramate + NADP(+) = UDP-N-acetyl-3-O-(1-carboxyvinyl)-alpha-D-glucosamine + NADPH + H(+). The protein operates within cell wall biogenesis; peptidoglycan biosynthesis. Its function is as follows. Cell wall formation. The chain is UDP-N-acetylenolpyruvoylglucosamine reductase from Rhodopseudomonas palustris (strain HaA2).